We begin with the raw amino-acid sequence, 627 residues long: MDRLYYENPYDVVVVGAGHAGCEAALATARLGLKTAIMSISLDSVADLPCNPNIGGTGKGHLVKEVDALGGEMGLVIDKTYIQSRMLNTSKGPAVHSLRVQADKRKYHDEMKSVLENTENLDLIEAEVVDIEVEDNKIKSITTAQGAIFPTRAVILATGTYLKGLVMMGEYTYESGPHGMKSSKKLSYSLKNLGIELRRFKTGTPARVHRDSLNYEVMTVQPGDDDVIPFSFLNDGKDISKKQEHCYLTYTTLKTKQIIEDNLERSPMYAGIVKGVGPRYCPSIEDKIVRFPDRDEHQVFVEPEGLSTKEMYIQGVSSTLPEEVQKEMYKTIIGFENVRFMRSAYGIEYDCIDPTILKRTLEHLEINNLFFAGQINGSSGYEEAAGQGIIAGINAAMNLLGKEPFVLDRSDAYIGVLIDDLVTKGTNEPYRMMTSRCEYRLTLRQDNADLRLTERAHEIGLATDERYEKMLHKKKTIDEEIERLKSIMVTPTEETNEKLRNLGSSELKTGITLLDLIKRPELTYDKTEEFDAERTELPRYLRLQVETHIKYEGYIAKQMSQIKQFKKLENRKLDMIEDYKEVMGLSNEAVQKLNDIKPESLGQASRISGVSPSDINVLLIYMETRKK.

FAD contacts are provided by residues 16 to 21 (GAGHAG), Val128, and Ser183. 277–291 (GPRYCPSIEDKIVRF) contacts NAD(+). Gln374 serves as a coordination point for FAD.

This sequence belongs to the MnmG family. In terms of assembly, homodimer. Heterotetramer of two MnmE and two MnmG subunits. Requires FAD as cofactor.

Its subcellular location is the cytoplasm. In terms of biological role, NAD-binding protein involved in the addition of a carboxymethylaminomethyl (cmnm) group at the wobble position (U34) of certain tRNAs, forming tRNA-cmnm(5)s(2)U34. In Finegoldia magna (strain ATCC 29328 / DSM 20472 / WAL 2508) (Peptostreptococcus magnus), this protein is tRNA uridine 5-carboxymethylaminomethyl modification enzyme MnmG.